Reading from the N-terminus, the 1239-residue chain is Erythroid differentiation-related factor 1 (1239 aa).

Disordered stretches follow at residues 1-39 (MGDPKEAGAEASPSGAAARGGLSLLSQADSEEPSAQGSA), 219-269 (AQPV…REPL), 517-559 (PKKE…DPAD), and 620-646 (KKESDLPAADPSTPIPLKYEDESTRGG). Composition is skewed to low complexity over residues 9 to 28 (AEASPSGAAARGGLSLLSQA) and 253 to 263 (SSVSEDPSASS). Over residues 530-547 (NSDESYSEEEEEMADSDE) the composition is skewed to acidic residues. TPR repeat units lie at residues 693–726 (SKAYYILSDAAMSLQKYGRALRYIKLALQSHDTY) and 914–953 (AQAHCGAEDEFKREFSPEEGLYYSKAVDYYLKALRSLGTR).

It localises to the nucleus. Transcription factor involved in erythroid differentiation. Involved in transcriptional activation of the globin gene. This is Erythroid differentiation-related factor 1 (Edrf1) from Mus musculus (Mouse).